A 170-amino-acid chain; its full sequence is Phosphopantetheine adenylyltransferase (170 aa).

Threonine 10 is a binding site for substrate. Residues 10–11 (TF) and histidine 18 contribute to the ATP site. Residues lysine 42, valine 79, and arginine 93 each contribute to the substrate site. ATP-binding positions include 94–96 (GLR), glutamate 104, and 129–135 (TQFISST).

It belongs to the bacterial CoaD family. Homohexamer. Mg(2+) serves as cofactor.

It localises to the cytoplasm. The enzyme catalyses (R)-4'-phosphopantetheine + ATP + H(+) = 3'-dephospho-CoA + diphosphate. It participates in cofactor biosynthesis; coenzyme A biosynthesis; CoA from (R)-pantothenate: step 4/5. In terms of biological role, reversibly transfers an adenylyl group from ATP to 4'-phosphopantetheine, yielding dephospho-CoA (dPCoA) and pyrophosphate. This is Phosphopantetheine adenylyltransferase from Parvibaculum lavamentivorans (strain DS-1 / DSM 13023 / NCIMB 13966).